The sequence spans 60 residues: Putative per-hexamer repeat protein 1 (60 aa).

The sequence is that of Putative per-hexamer repeat protein 1 (Phxr1) from Mus musculus (Mouse).